We begin with the raw amino-acid sequence, 477 residues long: Interferon gamma receptor 1 (477 aa).

An N-terminal signal peptide occupies residues 1–25 (MGPQAAAGRMILLVVLMLSAKVGSG). Over 26–254 (ALTSTEDPEP…PPFHDDRKDS (229 aa)) the chain is Extracellular. 2 N-linked (GlcNAc...) asparagine glycosylation sites follow: N61 and N85. 4 disulfides stabilise this stretch: C83/C91, C128/C174, C203/C208, and C222/C243. A helical membrane pass occupies residues 255–275 (IWILVVAPLTVFTVVILVFAY). At 276–477 (WYTKKNSFKR…RLTGEAQELS (202 aa)) the chain is on the cytoplasmic side. Disordered regions lie at residues 335–386 (TVTA…LSSN) and 402–446 (SDSG…SGYD). Position 362 is a phosphoserine (S362). T367 carries the post-translational modification Phosphothreonine. S370 carries the post-translational modification Phosphoserine. T373 and T375 each carry phosphothreonine. A compositionally biased stretch (polar residues) spans 375 to 386 (TQRRSFSLLSSN). Phosphoserine occurs at positions 379 and 402. The span at 402–416 (SDSGLVGSGSSISDL) shows a compositional bias: low complexity. Y445 is modified (phosphotyrosine).

It belongs to the type II cytokine receptor family. In terms of assembly, monomer. Heterodimer with IFNGR2, to form the IFNG receptor complex. Interacts with JAK1. Interacts (when phosphorylated) with STAT1. Interacts with SOCS1. Post-translationally, phosphorylated at Ser/Thr residues. Phosphorylation of Tyr-445 is required for IFNG receptor signal transduction. Influenza virus infection leads to phosphorylation in a CSNK1A1-dependent manner. In terms of processing, ubiquitinated after phosphorylation in a CSNK1A1-dependent manner, leading to the lysosome-dependent degradation. Proteasomally degraded through 'Lys-48'-mediated ubiquitination. Ubiquitination is necessary for efficient IFNGR1 signaling.

Its subcellular location is the cell membrane. Functionally, receptor subunit for interferon gamma/INFG that plays crucial roles in antimicrobial, antiviral, and antitumor responses by activating effector immune cells and enhancing antigen presentation (, PubMed:20926559, PubMed:27286456). Associates with transmembrane accessory factor IFNGR2 to form a functional receptor. Upon ligand binding, the intracellular domain of IFNGR1 opens out to allow association of downstream signaling components JAK1 and JAK2. In turn, activated JAK1 phosphorylates IFNGR1 to form a docking site for STAT1. Subsequent phosphorylation of STAT1 leads to its dimerization, translocation to the nucleus, and stimulation of target gene transcription. STAT3 can also be activated in a similar manner although activation seems weaker. IFNGR1 intracellular domain phosphorylation also provides a docking site for SOCS1 that regulates the JAK-STAT pathway by competing with STAT1 binding to IFNGR1. The chain is Interferon gamma receptor 1 from Mus musculus (Mouse).